Consider the following 217-residue polypeptide: Aminopyrimidine aminohydrolase (217 aa).

Asp44 provides a ligand contact to substrate. The active-site Nucleophile is the Cys135. The substrate site is built by Tyr139 and Tyr165. Glu207 (proton donor) is an active-site residue.

This sequence belongs to the TenA family. As to quaternary structure, homotetramer.

It carries out the reaction 4-amino-5-aminomethyl-2-methylpyrimidine + H2O = 4-amino-5-hydroxymethyl-2-methylpyrimidine + NH4(+). Its pathway is cofactor biosynthesis; thiamine diphosphate biosynthesis. In terms of biological role, catalyzes an amino-pyrimidine hydrolysis reaction at the C5' of the pyrimidine moiety of thiamine compounds to give a hydroxymethylpyrimidine (HMP). Displays low activity on 4-amino-5-aminomethyl-2-methylpyrimidine as substrate, indicating that the enzyme may act on a different HMP precursor that may derive from the human stomach food assumption or processing. Is probably involved in thiamine biosynthesis. Does not display thiaminase II activity, as it is unable to hydrolyze thiamine. This Helicobacter pylori (Campylobacter pylori) protein is Aminopyrimidine aminohydrolase.